Here is a 173-residue protein sequence, read N- to C-terminus: Ferric citrate uptake sigma factor FecI (173 aa).

The Polymerase core binding signature appears at 40 to 52 (DIAQDTFLRVMVS). Positions 139-158 (YSEIAHKLGVSISSVKKYVA) form a DNA-binding region, H-T-H motif.

Belongs to the sigma-70 factor family. ECF subfamily. As to quaternary structure, interacts with FecR (via cytoplasmic N-terminus).

Its function is as follows. Sigma factors are initiation factors that promote the attachment of RNA polymerase to specific initiation sites and are then released. This sigma factor regulates transcriptional activation of the fecABCDE operon which mediates ferric citrate transport. This is Ferric citrate uptake sigma factor FecI (fecI) from Escherichia coli (strain K12).